Consider the following 239-residue polypeptide: 1-(5-phosphoribosyl)-5-[(5-phosphoribosylamino)methylideneamino] imidazole-4-carboxamide isomerase (239 aa).

Asp8 serves as the catalytic Proton acceptor. The Proton donor role is filled by Asp129.

Belongs to the HisA/HisF family.

Its subcellular location is the cytoplasm. It carries out the reaction 1-(5-phospho-beta-D-ribosyl)-5-[(5-phospho-beta-D-ribosylamino)methylideneamino]imidazole-4-carboxamide = 5-[(5-phospho-1-deoxy-D-ribulos-1-ylimino)methylamino]-1-(5-phospho-beta-D-ribosyl)imidazole-4-carboxamide. The protein operates within amino-acid biosynthesis; L-histidine biosynthesis; L-histidine from 5-phospho-alpha-D-ribose 1-diphosphate: step 4/9. This chain is 1-(5-phosphoribosyl)-5-[(5-phosphoribosylamino)methylideneamino] imidazole-4-carboxamide isomerase, found in Paramagnetospirillum magneticum (strain ATCC 700264 / AMB-1) (Magnetospirillum magneticum).